The following is a 262-amino-acid chain: MEMKKRLTLELRNKKPGEVKELVLDNCRSDDGKIVGLSSDFENLEFLSMINVNLLSISNLPKLNKLRKLELSDNRISGGLEVLAERTPNLTHLNLSGNKIKDINTLEPLKKLPNLHSLDLFNCEVTMLINYRESVFTLLPQLTYLDGFDADEQEAPDSDPEADGDGLEDEYENGEGEEEEDDDEEDDLDEEVIDEEDDEDDDLEGEEEEDGVDDEEEDEEEDGEDEEDDEADDDLPRGEKRKRNLEDEGEEDPEDEEDDEDD.

LRR repeat units lie at residues 16–40, 43–64, 65–87, and 89–110; these read PGEV…LSSD, NLEF…PKLN, KLRK…AERT, and NLTH…EPLK. The 39-residue stretch at 123–161 folds into the LRRCT domain; the sequence is CEVTMLINYRESVFTLLPQLTYLDGFDADEQEAPDSDPE. The span at 150–233 shows a compositional bias: acidic residues; the sequence is ADEQEAPDSD…EDEEDDEADD (84 aa). Residues 150-262 form a disordered region; sequence ADEQEAPDSD…PEDEEDDEDD (113 aa). Positions 240–243 match the Nuclear localization signal motif; that stretch reads KRKR. Residues 247–262 are compositionally biased toward acidic residues; the sequence is DEGEEDPEDEEDDEDD.

It belongs to the ANP32 family. In terms of assembly, interacts with histones H3 and H4. Interacts with KLF5; this interaction induces promoter region-specific histone incorporation and inhibition of histone acetylation by ANP32B. Post-translationally, directly cleaved by caspase-3/CASP3.

The protein resides in the nucleus. Its function is as follows. Multifunctional protein that is involved in the regulation of many processes including cell proliferation, apoptosis, cell cycle progression or transcription. Regulates the proliferation of neuronal stem cells, differentiation of leukemic cells and progression from G1 to S phase of the cell cycle. As negative regulator of caspase-3-dependent apoptosis, may act as an antagonist of ANP32A in regulating tissue homeostasis. Exhibits histone chaperone properties, able to recruit histones to certain promoters, thus regulating the transcription of specific genes. Also plays an essential role in the nucleocytoplasmic transport of specific mRNAs via the uncommon nuclear mRNA export receptor XPO1/CRM1. The sequence is that of Acidic leucine-rich nuclear phosphoprotein 32 family member B (ANP32B) from Gallus gallus (Chicken).